The chain runs to 285 residues: Chemotaxis protein LafT (285 aa).

Transmembrane regions (helical) follow at residues 4-23 (FLGV…WAGG), 34-51 (FLII…GNPP), 171-191 (ALPG…MQAI), and 201-222 (HVAA…GLDP). Residues 223–285 (LSNAMAQRVK…MEKWLAEQEG (63 aa)) lie on the Cytoplasmic side of the membrane.

This sequence belongs to the MotA family.

The protein resides in the cell inner membrane. Its function is as follows. Required for rotation of the flagellar motor. Probable transmembrane proton channel. This Vibrio parahaemolyticus serotype O3:K6 (strain RIMD 2210633) protein is Chemotaxis protein LafT (lafT).